The chain runs to 42 residues: Photosystem I reaction center subunit IX (42 aa).

A helical transmembrane segment spans residues 7-27 (YLSVAPVLSTLWFVALAGLLI).

It belongs to the PsaJ family.

It is found in the plastid. The protein localises to the chloroplast thylakoid membrane. Its function is as follows. May help in the organization of the PsaE and PsaF subunits. This is Photosystem I reaction center subunit IX from Atropa belladonna (Belladonna).